A 348-amino-acid chain; its full sequence is VIP36-like protein (348 aa).

A signal peptide spans 1–38 (MAATLGPLGSWQQWRRCLLARDGSRMLLLLLLLGSGQG). At 39 to 313 (PQQVGAGQTF…APLPPLSGLA (275 aa)) the chain is on the lumenal side. The region spanning 49–274 (EYLKREHSLS…DVISLKLFEL (226 aa)) is the L-type lectin-like domain. A carbohydrate is bound by residues serine 93 and aspartate 128. Positions 159, 161, and 163 each coordinate Ca(2+). Position 161–163 (161–163 (YPN)) interacts with a carbohydrate. A glycan (N-linked (GlcNAc...) asparagine) is linked at asparagine 181. Histidine 188 serves as a coordination point for a carbohydrate. Residue aspartate 191 participates in Ca(2+) binding. A disulfide bridge links cysteine 200 with cysteine 237. 258-260 (GDL) serves as a coordination point for a carbohydrate. Residues 314–334 (LFHIVFFSLVIFVFAIVIGII) form a helical membrane-spanning segment. Over 335 to 348 (LYNKWQEQSRKRFY) the chain is Cytoplasmic. An Endoplasmic reticulum retention signal motif is present at residues 344 to 346 (RKR).

Its subcellular location is the endoplasmic reticulum membrane. The protein localises to the golgi apparatus membrane. Its function is as follows. May be involved in the regulation of export from the endoplasmic reticulum of a subset of glycoproteins. May function as a regulator of ERGIC-53. The chain is VIP36-like protein (LMAN2L) from Pongo abelii (Sumatran orangutan).